Here is a 144-residue protein sequence, read N- to C-terminus: Transcriptional regulator MraZ (144 aa).

SpoVT-AbrB domains are found at residues 5 to 50 (TFNH…ALPQ) and 81 to 124 (AHEV…DRAA).

This sequence belongs to the MraZ family. In terms of assembly, forms oligomers.

It localises to the cytoplasm. The protein resides in the nucleoid. This chain is Transcriptional regulator MraZ, found in Anaeromyxobacter dehalogenans (strain 2CP-C).